We begin with the raw amino-acid sequence, 359 residues long: Cytoplasmic tRNA 2-thiolation protein 1 (359 aa).

This sequence belongs to the TtcA family. CTU1/NCS6/ATPBD3 subfamily. As to quaternary structure, interacts with NCS2 and URM1. May act by forming a heterodimer with NCS2. Component of a large molecular weight complex of more than 250 kDa.

It is found in the cytoplasm. It localises to the mitochondrion. It functions in the pathway tRNA modification; 5-methoxycarbonylmethyl-2-thiouridine-tRNA biosynthesis. Its function is as follows. Plays a central role in 2-thiolation of mcm(5)S(2)U at tRNA wobble positions of tRNA(Lys), tRNA(Glu) and tRNA(Gln). Directly binds tRNAs and probably acts by catalyzing adenylation of tRNAs, an intermediate required for 2-thiolation. It is unclear whether it acts as a sulfurtransferase that transfers sulfur from thiocarboxylated URM1 onto the uridine of tRNAs at wobble position. Prior mcm(5) tRNA modification by the elongator complex is required for 2-thiolation. May also be involved in protein urmylation. The sequence is that of Cytoplasmic tRNA 2-thiolation protein 1 from Saccharomyces cerevisiae (strain RM11-1a) (Baker's yeast).